We begin with the raw amino-acid sequence, 153 residues long: Vasotocin-neurophysin VT 1 (153 aa).

The N-terminal stretch at 1–20 (MPYSTFPLLWVLGLLALSSA) is a signal peptide. Cysteine 21 and cysteine 26 are oxidised to a cystine. Glycine amide is present on glycine 29. Cystine bridges form between cysteine 41/cysteine 85, cysteine 44/cysteine 58, cysteine 52/cysteine 75, cysteine 59/cysteine 65, cysteine 92/cysteine 104, cysteine 98/cysteine 116, and cysteine 105/cysteine 110.

Belongs to the vasopressin/oxytocin family. Post-translationally, seven disulfide bonds are present in neurophysin.

Its subcellular location is the secreted. Functionally, vasotocin is an antidiuretic hormone. This chain is Vasotocin-neurophysin VT 1, found in Oncorhynchus keta (Chum salmon).